A 209-amino-acid polypeptide reads, in one-letter code: Mitochondrial import inner membrane translocase subunit Tim23 (209 aa).

3 helical membrane-spanning segments follow: residues 73–93 (FELAFFTIGGCCMTGAAFGAM), 125–145 (ALWANTLGSLALLYSAFGVII), and 172–194 (GGLRGAARGGLAGLTLTGLYALY).

The protein belongs to the Tim17/Tim22/Tim23 family. In terms of assembly, component of the TIM23 complex at least composed of TIMM23, TIMM17 (TIMM17A or TIMM17B) and TIMM50; within this complex, directly interacts with TIMM50. The complex interacts with the TIMM44 component of the PAM complex and with DNAJC15. Upon mitochondrial depolarization, interacts with PINK1; the interaction is required for PINK1 accumulation at the outer mitochondrial membrane, kinase activation by autophosphorylation and PRKN recruitement to mitochondria.

The protein localises to the mitochondrion inner membrane. Its function is as follows. Essential component of the TIM23 complex, a complex that mediates the translocation of transit peptide-containing proteins across the mitochondrial inner membrane. Has a role in the activation of stress-induced mitophagy by protecting PINK1 from OMA1-mediated degradation and facilitating its accumulation at the outer mitochondrial membrane in response to depolarization. The sequence is that of Mitochondrial import inner membrane translocase subunit Tim23 (TIMM23) from Bos taurus (Bovine).